A 555-amino-acid polypeptide reads, in one-letter code: CTP synthase (555 aa).

The segment at 1 to 277 (MPKEPETEYD…DQHVMERLNV (277 aa)) is amidoligase domain. Ser-26 contributes to the CTP binding site. Residue Ser-26 participates in UTP binding. ATP is bound at residue 27–32 (GLGKGI). Tyr-67 contacts L-glutamine. Position 84 (Asp-84) interacts with ATP. Positions 84 and 152 each coordinate Mg(2+). Residues 159–161 (DIE), 198–203 (KTKPTQ), and Lys-234 contribute to the CTP site. UTP-binding positions include 198–203 (KTKPTQ) and Lys-234. The 236-residue stretch at 307–542 (LVGKYDLEDA…LKSVDSTLDA (236 aa)) folds into the Glutamine amidotransferase type-1 domain. Residue Gly-364 coordinates L-glutamine. The active-site Nucleophile; for glutamine hydrolysis is the Cys-391. L-glutamine-binding positions include 392 to 395 (LGFQ), Glu-415, and Arg-472. Catalysis depends on residues His-515 and Glu-517.

Belongs to the CTP synthase family. In terms of assembly, homotetramer.

The enzyme catalyses UTP + L-glutamine + ATP + H2O = CTP + L-glutamate + ADP + phosphate + 2 H(+). The catalysed reaction is L-glutamine + H2O = L-glutamate + NH4(+). It carries out the reaction UTP + NH4(+) + ATP = CTP + ADP + phosphate + 2 H(+). It participates in pyrimidine metabolism; CTP biosynthesis via de novo pathway; CTP from UDP: step 2/2. Allosterically activated by GTP, when glutamine is the substrate; GTP has no effect on the reaction when ammonia is the substrate. The allosteric effector GTP functions by stabilizing the protein conformation that binds the tetrahedral intermediate(s) formed during glutamine hydrolysis. Inhibited by the product CTP, via allosteric rather than competitive inhibition. Catalyzes the ATP-dependent amination of UTP to CTP with either L-glutamine or ammonia as the source of nitrogen. Regulates intracellular CTP levels through interactions with the four ribonucleotide triphosphates. The chain is CTP synthase from Haloquadratum walsbyi (strain DSM 16790 / HBSQ001).